The sequence spans 351 residues: MKNVLLGRSAAELEDWAVAQGHKSFRGRQIHDWLYNKGVKSLSEISALPKQWRTELEAQTFRVGRLKLVHQSVAADATTKLLLATDDGETIETVGIPTDQRLTVCISSQVGCPMACRFCATGKSGLQRSLATHEIVDQVLSVREAMDRRPSHVVFMGMGEPLLNSEAVLETIRCLNTDLGIGQRRITVSTVGVPKTLPQLAELAMEKLGRAQFTLAVSLHAPNQQLREELIPTAHAYPYDDLLDDCRHYLDLTGRRVSFEYILLGELNDHPEHAAELADRVGGFQSHVNLIAYNPIEEEEFKRPTSQRIEAFRRVLERRGVAVSLRASRGLDQNAACGQLRRQHLTGSDLT.

The active-site Proton acceptor is E92. The region spanning 98 to 332 (TDQRLTVCIS…VSLRASRGLD (235 aa)) is the Radical SAM core domain. C105 and C337 are disulfide-bonded. [4Fe-4S] cluster contacts are provided by C112, C116, and C119. S-adenosyl-L-methionine contacts are provided by residues 159-160 (GE), S189, 218-220 (SLH), and N294. Catalysis depends on C337, which acts as the S-methylcysteine intermediate.

It belongs to the radical SAM superfamily. RlmN family. It depends on [4Fe-4S] cluster as a cofactor.

It localises to the cytoplasm. The enzyme catalyses adenosine(2503) in 23S rRNA + 2 reduced [2Fe-2S]-[ferredoxin] + 2 S-adenosyl-L-methionine = 2-methyladenosine(2503) in 23S rRNA + 5'-deoxyadenosine + L-methionine + 2 oxidized [2Fe-2S]-[ferredoxin] + S-adenosyl-L-homocysteine. It carries out the reaction adenosine(37) in tRNA + 2 reduced [2Fe-2S]-[ferredoxin] + 2 S-adenosyl-L-methionine = 2-methyladenosine(37) in tRNA + 5'-deoxyadenosine + L-methionine + 2 oxidized [2Fe-2S]-[ferredoxin] + S-adenosyl-L-homocysteine. Its function is as follows. Specifically methylates position 2 of adenine 2503 in 23S rRNA and position 2 of adenine 37 in tRNAs. The sequence is that of Probable dual-specificity RNA methyltransferase RlmN from Synechococcus sp. (strain CC9902).